We begin with the raw amino-acid sequence, 467 residues long: ATP synthase subunit beta (467 aa).

150–157 (GGAGVGKT) is an ATP binding site.

The protein belongs to the ATPase alpha/beta chains family. In terms of assembly, F-type ATPases have 2 components, CF(1) - the catalytic core - and CF(0) - the membrane proton channel. CF(1) has five subunits: alpha(3), beta(3), gamma(1), delta(1), epsilon(1). CF(0) has three main subunits: a(1), b(2) and c(9-12). The alpha and beta chains form an alternating ring which encloses part of the gamma chain. CF(1) is attached to CF(0) by a central stalk formed by the gamma and epsilon chains, while a peripheral stalk is formed by the delta and b chains.

The protein localises to the cell inner membrane. The catalysed reaction is ATP + H2O + 4 H(+)(in) = ADP + phosphate + 5 H(+)(out). In terms of biological role, produces ATP from ADP in the presence of a proton gradient across the membrane. The catalytic sites are hosted primarily by the beta subunits. The polypeptide is ATP synthase subunit beta (Vibrio alginolyticus).